We begin with the raw amino-acid sequence, 1390 residues long: DNA-directed RNA polymerase subunit beta'' (1390 aa).

The Zn(2+) site is built by Cys224, Cys295, Cys302, and Cys305.

The protein belongs to the RNA polymerase beta' chain family. RpoC2 subfamily. In plastids the minimal PEP RNA polymerase catalytic core is composed of four subunits: alpha, beta, beta', and beta''. When a (nuclear-encoded) sigma factor is associated with the core the holoenzyme is formed, which can initiate transcription. Zn(2+) is required as a cofactor.

The protein localises to the plastid. Its subcellular location is the chloroplast. It carries out the reaction RNA(n) + a ribonucleoside 5'-triphosphate = RNA(n+1) + diphosphate. DNA-dependent RNA polymerase catalyzes the transcription of DNA into RNA using the four ribonucleoside triphosphates as substrates. In Daucus carota (Wild carrot), this protein is DNA-directed RNA polymerase subunit beta''.